The following is a 44-amino-acid chain: Mu-conotoxin-like Cal 12.1.3b (44 aa).

4 disulfides stabilise this stretch: C3-C16, C11-C28, C18-C33, and C27-C38. Position 23 is a 4-hydroxyproline (P23). W36 and W37 each carry 6'-bromotryptophan. P39 bears the 4-hydroxyproline mark. Residue W43 is modified to 6'-bromotryptophan.

As to expression, expressed by the venom duct.

The protein resides in the secreted. In terms of biological role, mu-conotoxins block voltage-gated sodium channels. This toxin reversibly blocks voltage-gated sodium channel in cephalopods, with no alteration in the voltage dependence of sodium conductance or on the kinetics of inactivation. This chain is Mu-conotoxin-like Cal 12.1.3b, found in Californiconus californicus (California cone).